The primary structure comprises 712 residues: Ribosomal RNA large subunit methyltransferase K/L (712 aa).

Positions 46–157 (GAYQALLHSR…RENMVVSLDL (112 aa)) constitute a THUMP domain.

It belongs to the methyltransferase superfamily. RlmKL family.

Its subcellular location is the cytoplasm. The enzyme catalyses guanosine(2445) in 23S rRNA + S-adenosyl-L-methionine = N(2)-methylguanosine(2445) in 23S rRNA + S-adenosyl-L-homocysteine + H(+). It catalyses the reaction guanosine(2069) in 23S rRNA + S-adenosyl-L-methionine = N(2)-methylguanosine(2069) in 23S rRNA + S-adenosyl-L-homocysteine + H(+). In terms of biological role, specifically methylates the guanine in position 2445 (m2G2445) and the guanine in position 2069 (m7G2069) of 23S rRNA. This is Ribosomal RNA large subunit methyltransferase K/L from Actinobacillus pleuropneumoniae serotype 5b (strain L20).